Here is a 129-residue protein sequence, read N- to C-terminus: MKLFTGLIFCSLVLGVSSQWYSFIGEAVQGAWDMYRAYSDMREANYKNSDKYFHARGNYDAAQRGPGGAWAAKVISDARERSQRVTDLFKYGDSGHGVEDSKADQAANEWGRSGKDPNHFRPSGLPDKY.

Residues 1–18 form the signal peptide; it reads MKLFTGLIFCSLVLGVSS. Glutamine 19 carries the pyrrolidone carboxylic acid modification. The segment at 92–129 is disordered; that stretch reads GDSGHGVEDSKADQAANEWGRSGKDPNHFRPSGLPDKY.

This sequence belongs to the SAA family. As to quaternary structure, apolipoprotein of the HDL complex. In terms of tissue distribution, expressed by the liver; secreted in plasma.

The protein resides in the secreted. Its function is as follows. Major acute phase reactant. This Neovison vison (American mink) protein is Serum amyloid A-2 protein (SAA2P0DJI9).